The sequence spans 176 residues: N5-carboxyaminoimidazole ribonucleotide mutase (176 aa).

Substrate is bound by residues S14, D17, and R44.

The protein belongs to the AIR carboxylase family. Class I subfamily.

The catalysed reaction is 5-carboxyamino-1-(5-phospho-D-ribosyl)imidazole + H(+) = 5-amino-1-(5-phospho-D-ribosyl)imidazole-4-carboxylate. It participates in purine metabolism; IMP biosynthesis via de novo pathway; 5-amino-1-(5-phospho-D-ribosyl)imidazole-4-carboxylate from 5-amino-1-(5-phospho-D-ribosyl)imidazole (N5-CAIR route): step 2/2. Functionally, catalyzes the conversion of N5-carboxyaminoimidazole ribonucleotide (N5-CAIR) to 4-carboxy-5-aminoimidazole ribonucleotide (CAIR). The chain is N5-carboxyaminoimidazole ribonucleotide mutase from Synechocystis sp. (strain ATCC 27184 / PCC 6803 / Kazusa).